The primary structure comprises 445 residues: Interferon-activable protein 202 (445 aa).

Over residues 1–27 (MSNRNLRSSTNSEFSEGQHQTPSSDSS) the composition is skewed to polar residues. The segment at 1–57 (MSNRNLRSSTNSEFSEGQHQTPSSDSSGHGEDQPQASPGPNKKSHTPKKNISKGAVL) is disordered. Residues 42–51 (KKSHTPKKNI) show a composition bias toward basic residues. HIN-200 domains are found at residues 46–243 (TPKK…IKGE) and 244–441 (KLLK…MEVI). Required for homomultimerization stretches follow at residues 82–89 (MFHATVAT) and 281–288 (MFHATVAT).

It belongs to the HIN-200 family. As to quaternary structure, homomultimer; homotetramerizes (via HIN-200 domain 2), enhancing affinity for double-stranded DNA (dsDNA). Interacts (via HIN-200 domain 2) with AIM2 (via HIN-200 domain); preventing activation of the AIM2 inflammasome. Binds to several transcription factors, including NF-kappa-B p50 (NFKB1) and p65 (RELA), FOS, JUN, E2F1, E2F4, MYOD1 and myogenin. Also binds TP53/p53, the hypophosphorylated, growth-inhibitory form of the retinoblastoma protein and the p53-binding protein 1 (TP53BP1). Phosphorylated.

The protein localises to the cytoplasm. Its subcellular location is the nucleus. DNA-binding protein involved in innate immune response and has anti-inflammatory activity. Inhibits caspase activation in response to cytosolic DNA by preventing activation of the AIM2 inflammasome, probably by sequestering cytoplasmic DNA and preventing its being bound by AIM2. Also inhibits activation of the AIM2 inflammasome via a direct interaction with AIM2, which prevents the interaction between AIM2 and PYCARD and formation of the AIM2 inflammasome. Binds double-stranded DNA (dsDNA) in the cytosol. Has anti-apoptotic effects due to inhibition of the transcriptional activity of TP53/p53. Inhibits the transcriptional activity of several transcription factors, including NF-kappa-B p50 and p65, FOS, JUN, E2F1, E2F4, MYOD1 and myogenin. The sequence is that of Interferon-activable protein 202 from Mus musculus (Mouse).